The chain runs to 164 residues: B-phycoerythrin alpha chain (164 aa).

(2R,3E)-phycoerythrobilin is bound by residues C82 and C139.

Belongs to the phycobiliprotein family. Heteromer of 6 alpha, 6 beta and one gamma chain. Post-translationally, contains two covalently linked bilin chromophores.

It localises to the plastid. Its subcellular location is the chloroplast thylakoid membrane. Its function is as follows. Light-harvesting photosynthetic bile pigment-protein from the phycobiliprotein complex. The polypeptide is B-phycoerythrin alpha chain (cpeA) (Porphyridium purpureum (Red alga)).